Here is a 51-residue protein sequence, read N- to C-terminus: Large ribosomal subunit protein eL39 (51 aa).

Residues 1–19 (MSHNMKGQKKRLAKAHKQN) show a composition bias toward basic residues. Residues 1–23 (MSHNMKGQKKRLAKAHKQNSRVP) form a disordered region.

This sequence belongs to the eukaryotic ribosomal protein eL39 family.

This is Large ribosomal subunit protein eL39 from Methanosarcina mazei (strain ATCC BAA-159 / DSM 3647 / Goe1 / Go1 / JCM 11833 / OCM 88) (Methanosarcina frisia).